The following is a 248-amino-acid chain: tRNA (guanine-N(7)-)-methyltransferase (248 aa).

S-adenosyl-L-methionine-binding positions include Gly70, 93-94 (EI), 129-130 (NA), and Leu149. Asp152 is a catalytic residue. Position 227-229 (227-229 (SEE)) interacts with S-adenosyl-L-methionine.

Belongs to the class I-like SAM-binding methyltransferase superfamily. TrmB family.

The protein resides in the nucleus. The catalysed reaction is guanosine(46) in tRNA + S-adenosyl-L-methionine = N(7)-methylguanosine(46) in tRNA + S-adenosyl-L-homocysteine. The protein operates within tRNA modification; N(7)-methylguanine-tRNA biosynthesis. Its function is as follows. Catalyzes the formation of N(7)-methylguanine at position 46 (m7G46) in tRNA. This chain is tRNA (guanine-N(7)-)-methyltransferase, found in Drosophila mojavensis (Fruit fly).